Here is a 298-residue protein sequence, read N- to C-terminus: Ethanolamine ammonia-lyase small subunit (298 aa).

3 residues coordinate adenosylcob(III)alamin: Val210, Glu231, and Cys261.

The protein belongs to the EutC family. In terms of assembly, the basic unit is a heterodimer which dimerizes to form tetramers. The heterotetramers trimerize; 6 large subunits form a core ring with 6 small subunits projecting outwards. The cofactor is adenosylcob(III)alamin.

It is found in the bacterial microcompartment. The catalysed reaction is ethanolamine = acetaldehyde + NH4(+). It functions in the pathway amine and polyamine degradation; ethanolamine degradation. In terms of biological role, catalyzes the deamination of various vicinal amino-alcohols to oxo compounds. Allows this organism to utilize ethanolamine as the sole source of nitrogen and carbon in the presence of external vitamin B12. This is Ethanolamine ammonia-lyase small subunit from Salmonella heidelberg (strain SL476).